The following is a 130-amino-acid chain: Small ribosomal subunit protein uS8 (130 aa).

Belongs to the universal ribosomal protein uS8 family. Part of the 30S ribosomal subunit.

Its function is as follows. One of the primary rRNA binding proteins, it binds directly to 16S rRNA central domain where it helps coordinate assembly of the platform of the 30S subunit. The protein is Small ribosomal subunit protein uS8 of Nitrosopumilus maritimus (strain SCM1).